Here is a 201-residue protein sequence, read N- to C-terminus: FMN-dependent NADH:quinone oxidoreductase (201 aa).

FMN contacts are provided by residues S10, 16–18 (SQS), 96–99 (MYNF), and 140–143 (SRGG).

The protein belongs to the azoreductase type 1 family. Homodimer. Requires FMN as cofactor.

It carries out the reaction 2 a quinone + NADH + H(+) = 2 a 1,4-benzosemiquinone + NAD(+). The catalysed reaction is N,N-dimethyl-1,4-phenylenediamine + anthranilate + 2 NAD(+) = 2-(4-dimethylaminophenyl)diazenylbenzoate + 2 NADH + 2 H(+). Functionally, quinone reductase that provides resistance to thiol-specific stress caused by electrophilic quinones. In terms of biological role, also exhibits azoreductase activity. Catalyzes the reductive cleavage of the azo bond in aromatic azo compounds to the corresponding amines. The sequence is that of FMN-dependent NADH:quinone oxidoreductase from Shigella flexneri serotype 5b (strain 8401).